The primary structure comprises 142 residues: ATP synthase epsilon chain (142 aa).

The protein belongs to the ATPase epsilon chain family. In terms of assembly, F-type ATPases have 2 components, CF(1) - the catalytic core - and CF(0) - the membrane proton channel. CF(1) has five subunits: alpha(3), beta(3), gamma(1), delta(1), epsilon(1). CF(0) has three main subunits: a, b and c.

The protein resides in the cell inner membrane. Functionally, produces ATP from ADP in the presence of a proton gradient across the membrane. The chain is ATP synthase epsilon chain from Pasteurella multocida (strain Pm70).